Consider the following 179-residue polypeptide: Gene 49 protein (179 aa).

Disordered regions lie at residues 1–38 (MKGNQLSYDDPWSTAPAQPEPAPAPEPETAPSATVTTA) and 102–137 (HYAGSGGSAPANGGGGGQQQSRAPQAAQEAPGGEKR). Pro residues predominate over residues 18-28 (QPEPAPAPEPE). A compositionally biased stretch (low complexity) spans 29–38 (TAPSATVTTA). Residues 104-119 (AGSGGSAPANGGGGGQ) are compositionally biased toward gly residues. Positions 120-132 (QQSRAPQAAQEAP) are enriched in low complexity.

The sequence is that of Gene 49 protein (49) from Mycobacterium (Mycobacteriophage L5).